A 534-amino-acid chain; its full sequence is MKGGNADSWQREKLASMESPEEPGASMDENYFVNYTFKDRSHSGRVAQGIMKLCLEEELFADVTISVEGREFQLHRLVLSAQSCFFRSMFTSNLKEAHNRVIVLQDVSESVFQLLVDYIYHGTVKLRAEELQEIYEVSDMYQLTSLFEECSRFLARTVQVGNCLQVMWLADRHSDPELYTAAKHCAKTHLAQLQNTEEFLHLPHRLLTDIISDGVPCSQNPTEAIEAWINFNKEEREAFAESLRTSLKEIGENVHIYLIGKESSRTHSLAVSLHCAEDDSISVSGQNSLCHQITAACKHGGDLYVVGGSIPRRMWKCNNATVDWEWCAPLPRDRLQHTLVSVPGKDAIYSLGGKTLQDTLSNAVIYYRVGDNVWTETTQLEVAVSGAAGANLNGIIYLLGGEENDLDFFTKPSRLIQCFDTETDKCHVKPYVLPFAGRMHAAVHKDLVFIVAEGDSLVCYNPLLDSFTRLCLPEAWSSAPSLWKIASCNGSIYVFRDRYKKGDANTYKLDPATSAVTVTRGIKVLLTNLQFVLA.

The interval 1-25 (MKGGNADSWQREKLASMESPEEPGA) is disordered. Residues 61–128 (ADVTISVEGR…IYHGTVKLRA (68 aa)) enclose the BTB domain. The BACK domain maps to 163–255 (CLQVMWLADR…SLKEIGENVH (93 aa)). 5 Kelch repeats span residues 255 to 301 (HIYL…KHGG), 302 to 344 (DLYV…SVPG), 347 to 394 (AIYS…NLNG), 396 to 446 (IYLL…VHKD), and 448 to 497 (VFIV…VFRD).

As to quaternary structure, component of the BCR(KBTBD4) E3 ubiquitin ligase complex, at least composed of CUL3, KBTBD4 and RBX1.

Substrate-specific adapter of a BCR (BTB-CUL3-RBX1) E3 ubiquitin ligase complex which targets CoREST corepressor complex components RCOR1, KDM1A/LSD1 and HDAC2 for proteasomal degradation. RCOR1 is likely to be the primary target while degradation of KDM1A and HDAC2 is likely due to their association with RCOR1. Also targets RCOR3, MIER2 and MIER3 for proteasomal degradation as well as associated proteins ZNF217 and RREB1. Degradation is dependent on the presence of an ELM2 domain in the target proteins. This is Kelch repeat and BTB domain-containing protein 4 (KBTBD4) from Homo sapiens (Human).